Consider the following 214-residue polypeptide: Type 4 apparatus protein DotN (214 aa).

Residues Cys52, Cys55, Cys84, and Cys87 each contribute to the Zn(2+) site.

The T4BSS is a complex nanomachine composed of several subcomplexes. This subunit is part of the Type IV Coupling Complex (T4CC), a subcomplex composed of the DotLMNYZ core and the IcmSW-LvgA adapter subunits, linked by the C-terminal tail of DotL. Six DotLMNYZ hetero-pentameric units may assemble into a hexameric nanomachine, forming an inner membrane channel for effectors to pass through. Interacts directly with DotL. Interacts with DotZ.

The protein resides in the cytoplasm. Its function is as follows. Component of the Dot/Icm type IVB secretion system (T4BSS), which is used to inject bacterial effector proteins into eukaryotic host cells. Part of a subcomplex which recruits effector proteins and delivers them to the core transmembrane subcomplex. The sequence is that of Type 4 apparatus protein DotN from Legionella pneumophila subsp. pneumophila (strain Philadelphia 1 / ATCC 33152 / DSM 7513).